The sequence spans 141 residues: D-aminoacyl-tRNA deacylase (141 aa).

A Gly-cisPro motif, important for rejection of L-amino acids motif is present at residues 133–134 (GP).

It belongs to the DTD family. Homodimer.

The protein resides in the cytoplasm. The enzyme catalyses glycyl-tRNA(Ala) + H2O = tRNA(Ala) + glycine + H(+). It carries out the reaction a D-aminoacyl-tRNA + H2O = a tRNA + a D-alpha-amino acid + H(+). Its function is as follows. An aminoacyl-tRNA editing enzyme that deacylates mischarged D-aminoacyl-tRNAs. Also deacylates mischarged glycyl-tRNA(Ala), protecting cells against glycine mischarging by AlaRS. Acts via tRNA-based rather than protein-based catalysis; rejects L-amino acids rather than detecting D-amino acids in the active site. By recycling D-aminoacyl-tRNA to D-amino acids and free tRNA molecules, this enzyme counteracts the toxicity associated with the formation of D-aminoacyl-tRNA entities in vivo and helps enforce protein L-homochirality. The protein is D-aminoacyl-tRNA deacylase of Thermobifida fusca (strain YX).